The chain runs to 298 residues: Ribosomal RNA processing protein 36 homolog (298 aa).

The disordered stretch occupies residues 1–131 (MKPDIIKKRR…SDAPVEMTAM (131 aa)). The segment covering 14–56 (SDDEDEYNEEDEMYEDDNNNYEEDEDDDDDDDEDDEDDDENEE) has biased composition (acidic residues). Composition is skewed to polar residues over residues 61-70 (QQLSNVSFSS) and 83-92 (LNLNTITKNL). 2 coiled-coil regions span residues 88 to 112 (ITKN…MNSK) and 196 to 228 (RERD…KNKL). The span at 98 to 111 (FKKEEQQEKEEMNS) shows a compositional bias: basic and acidic residues. The tract at residues 279–298 (ISSKEKTFLPQRRSFDQDEN) is disordered.

It belongs to the RRP36 family.

It localises to the nucleus. The protein localises to the nucleolus. In terms of biological role, involved in the early processing steps of the pre-rRNA in the maturation pathway leading to the 18S rRNA. The protein is Ribosomal RNA processing protein 36 homolog of Dictyostelium discoideum (Social amoeba).